The following is a 364-amino-acid chain: WAT1-related protein At5g47470 (364 aa).

A run of 10 helical transmembrane segments spans residues Met28–Met48, Phe59–Leu79, Leu93–Leu113, Ala124–Leu144, Ile158–Ser178, Val197–Gln217, Ile228–Leu248, Val255–Ala275, Pro293–Leu313, and Val319–Trp339. In terms of domain architecture, EamA 1 spans Val40 to Ser172. The EamA 2 domain occupies Ser219–Leu338.

Belongs to the drug/metabolite transporter (DMT) superfamily. Plant drug/metabolite exporter (P-DME) (TC 2.A.7.4) family.

It localises to the membrane. The polypeptide is WAT1-related protein At5g47470 (Arabidopsis thaliana (Mouse-ear cress)).